The following is a 432-amino-acid chain: Adenylosuccinate synthetase (432 aa).

GTP contacts are provided by residues 13 to 19 (GDEGKGK) and 41 to 43 (GHT). The active-site Proton acceptor is aspartate 14. 2 residues coordinate Mg(2+): aspartate 14 and glycine 41. IMP is bound by residues 14–17 (DEGK), 39–42 (NAGH), threonine 130, arginine 144, glutamine 225, threonine 240, and arginine 304. The active-site Proton donor is histidine 42. 300-306 (AVTGRPR) is a substrate binding site. GTP-binding positions include arginine 306, 332 to 334 (KLD), and 415 to 417 (STG).

It belongs to the adenylosuccinate synthetase family. In terms of assembly, homodimer. Mg(2+) serves as cofactor.

It is found in the cytoplasm. It catalyses the reaction IMP + L-aspartate + GTP = N(6)-(1,2-dicarboxyethyl)-AMP + GDP + phosphate + 2 H(+). Its pathway is purine metabolism; AMP biosynthesis via de novo pathway; AMP from IMP: step 1/2. In terms of biological role, plays an important role in the de novo pathway of purine nucleotide biosynthesis. Catalyzes the first committed step in the biosynthesis of AMP from IMP. In Haemophilus influenzae (strain ATCC 51907 / DSM 11121 / KW20 / Rd), this protein is Adenylosuccinate synthetase.